The sequence spans 628 residues: 1-deoxy-D-xylulose-5-phosphate synthase (628 aa).

Residues His72 and 113–115 (GHS) each bind thiamine diphosphate. Mg(2+) is bound at residue Asp144. Thiamine diphosphate is bound by residues 145–146 (GA), Asn173, Tyr284, and Glu367. Asn173 contacts Mg(2+).

The protein belongs to the transketolase family. DXPS subfamily. As to quaternary structure, homodimer. Mg(2+) serves as cofactor. Requires thiamine diphosphate as cofactor.

It carries out the reaction D-glyceraldehyde 3-phosphate + pyruvate + H(+) = 1-deoxy-D-xylulose 5-phosphate + CO2. Its pathway is metabolic intermediate biosynthesis; 1-deoxy-D-xylulose 5-phosphate biosynthesis; 1-deoxy-D-xylulose 5-phosphate from D-glyceraldehyde 3-phosphate and pyruvate: step 1/1. Catalyzes the acyloin condensation reaction between C atoms 2 and 3 of pyruvate and glyceraldehyde 3-phosphate to yield 1-deoxy-D-xylulose-5-phosphate (DXP). The sequence is that of 1-deoxy-D-xylulose-5-phosphate synthase from Exiguobacterium sibiricum (strain DSM 17290 / CCUG 55495 / CIP 109462 / JCM 13490 / 255-15).